Here is a 539-residue protein sequence, read N- to C-terminus: Chaperonin GroEL (539 aa).

ATP-binding positions include 29–32 (TLGP), 86–90 (DGTTT), G413, 476–478 (NAA), and D492.

Belongs to the chaperonin (HSP60) family. Forms a cylinder of 14 subunits composed of two heptameric rings stacked back-to-back. Interacts with the co-chaperonin GroES.

It is found in the cytoplasm. The enzyme catalyses ATP + H2O + a folded polypeptide = ADP + phosphate + an unfolded polypeptide.. In terms of biological role, together with its co-chaperonin GroES, plays an essential role in assisting protein folding. The GroEL-GroES system forms a nano-cage that allows encapsulation of the non-native substrate proteins and provides a physical environment optimized to promote and accelerate protein folding. In Macrococcus caseolyticus (strain JCSC5402) (Macrococcoides caseolyticum), this protein is Chaperonin GroEL.